The sequence spans 38 residues: NFLEMLKENCKLLWKRQKQKFRIPMPESLCQILKKKKQ.

2 positions are modified to glutamine amide: Gln-19 and Gln-38.

It belongs to the cationic peptide 04 (cupiennin) family. 10 (double chain) subfamily. In terms of tissue distribution, expressed by the venom gland.

Its subcellular location is the secreted. The chain is Toxin CSTX-16 from Cupiennius salei (American wandering spider).